Reading from the N-terminus, the 530-residue chain is Tegument protein UL21 homolog (530 aa).

This sequence belongs to the alphaherpesvirinae UL21 protein family. Interacts (via C-terminus) with UL16.

The protein resides in the virion tegument. It localises to the host cytoplasm. It is found in the host nucleus. May participate in DNA packaging/capsid maturation events. Promotes efficient incorporation of tegument proteins UL46, UL49, and US3 homologs into virions. May also play a role in capsid transport to the trans-Golgi network (TGN). The chain is Tegument protein UL21 homolog from Equus caballus (Horse).